A 548-amino-acid chain; its full sequence is Internalin H (548 aa).

Residues 1-30 (MKKRWNSVFKLVLMVTAILGLSLYVTTSQG) form the signal peptide. 7 LRR repeats span residues 93-105 (GVQY…GLEL), 113-127 (LTPL…ELEL), 135-149 (VSAI…TLDL), 157-171 (VTPL…VLYL), 179-193 (ISPL…YLSI), 201-215 (LTPL…TLKA), and 223-236 (ISPL…IEVH). Residues 480-518 (FTKNDNPNPDDPTTNTPTGNGDGTSNPSNSGGNTTLPTA) form a disordered region. Over residues 483–498 (NDNPNPDDPTTNTPTG) the composition is skewed to low complexity. A compositionally biased stretch (polar residues) spans 504-516 (SNPSNSGGNTTLP). The short motif at 515 to 519 (LPTAG) is the LPXTG sorting signal element. A518 carries the post-translational modification Pentaglycyl murein peptidoglycan amidated alanine. The propeptide at 519–548 (GDENTMLPIFIGVFLLGTATLILRKTIKVK) is removed by sortase A.

It belongs to the internalin family.

Its subcellular location is the secreted. The protein localises to the cell wall. Functionally, contributes to systemic listeriosis in mice by decreasing host IL-6 cytokine production and thus evasion of the host immune response. Does not contribute to invasion of the host intestinal tissue. The polypeptide is Internalin H (inlH) (Listeria monocytogenes serovar 1/2a (strain ATCC BAA-679 / EGD-e)).